A 306-amino-acid polypeptide reads, in one-letter code: Homoserine O-acetyltransferase (306 aa).

C142 (acyl-thioester intermediate) is an active-site residue. Residues K163 and S192 each contribute to the substrate site. The active-site Proton acceptor is H235. The active site involves E237. Substrate is bound at residue R249.

The protein belongs to the MetA family.

It localises to the cytoplasm. The enzyme catalyses L-homoserine + acetyl-CoA = O-acetyl-L-homoserine + CoA. It functions in the pathway amino-acid biosynthesis; L-methionine biosynthesis via de novo pathway; O-acetyl-L-homoserine from L-homoserine: step 1/1. In terms of biological role, transfers an acetyl group from acetyl-CoA to L-homoserine, forming acetyl-L-homoserine. The protein is Homoserine O-acetyltransferase of Clostridium botulinum (strain Eklund 17B / Type B).